A 125-amino-acid chain; its full sequence is MAISKEDVLEYISNLSVLELSELVKEFEEKFGVSAAPVMVAGGAAAGGAAAAAEEKTEFDIVLTDGGAKKIEVIKIVRALTGLGLKEAKDAVEQTPSTLKEGVAKAEAEEAKKQLEEAGAKVELK.

The protein belongs to the bacterial ribosomal protein bL12 family. As to quaternary structure, homodimer. Part of the ribosomal stalk of the 50S ribosomal subunit. Forms a multimeric L10(L12)X complex, where L10 forms an elongated spine to which 2 to 4 L12 dimers bind in a sequential fashion. Binds GTP-bound translation factors.

In terms of biological role, forms part of the ribosomal stalk which helps the ribosome interact with GTP-bound translation factors. Is thus essential for accurate translation. This is Large ribosomal subunit protein bL12 from Campylobacter jejuni subsp. jejuni serotype O:6 (strain 81116 / NCTC 11828).